The chain runs to 506 residues: Maturase K (506 aa).

This sequence belongs to the intron maturase 2 family. MatK subfamily.

The protein localises to the plastid. It localises to the chloroplast. In terms of biological role, usually encoded in the trnK tRNA gene intron. Probably assists in splicing its own and other chloroplast group II introns. In Uncarina grandidieri (Mouse trap tree), this protein is Maturase K.